Here is a 647-residue protein sequence, read N- to C-terminus: Acetyl-coenzyme A synthetase (647 aa).

CoA-binding positions include 190 to 193 and Thr-310; that span reads RGGR. Residues 386–388, 410–415, Asp-499, and Arg-514 contribute to the ATP site; these read GEP and DTWWQT. Residue Ser-522 coordinates CoA. Arg-525 is an ATP binding site. Val-536, His-538, and Val-541 together coordinate Mg(2+). Residue Arg-583 coordinates CoA. At Lys-608 the chain carries N6-acetyllysine.

The protein belongs to the ATP-dependent AMP-binding enzyme family. Mg(2+) serves as cofactor. Post-translationally, acetylated. Deacetylation by the SIR2-homolog deacetylase activates the enzyme.

It carries out the reaction acetate + ATP + CoA = acetyl-CoA + AMP + diphosphate. Catalyzes the conversion of acetate into acetyl-CoA (AcCoA), an essential intermediate at the junction of anabolic and catabolic pathways. AcsA undergoes a two-step reaction. In the first half reaction, AcsA combines acetate with ATP to form acetyl-adenylate (AcAMP) intermediate. In the second half reaction, it can then transfer the acetyl group from AcAMP to the sulfhydryl group of CoA, forming the product AcCoA. In Xylella fastidiosa (strain Temecula1 / ATCC 700964), this protein is Acetyl-coenzyme A synthetase.